A 262-amino-acid chain; its full sequence is Glucosamine-6-phosphate deaminase (262 aa).

Residue D63 is the Proton acceptor; for enolization step of the active site. The active-site For ring-opening step is the N129. H131 functions as the Proton acceptor; for ring-opening step in the catalytic mechanism. The active-site For ring-opening step is the E136.

It belongs to the glucosamine/galactosamine-6-phosphate isomerase family. NagB subfamily.

The enzyme catalyses alpha-D-glucosamine 6-phosphate + H2O = beta-D-fructose 6-phosphate + NH4(+). Its pathway is amino-sugar metabolism; N-acetylneuraminate degradation; D-fructose 6-phosphate from N-acetylneuraminate: step 5/5. Functionally, catalyzes the reversible isomerization-deamination of glucosamine 6-phosphate (GlcN6P) to form fructose 6-phosphate (Fru6P) and ammonium ion. This chain is Glucosamine-6-phosphate deaminase, found in Bacillus cereus (strain B4264).